The chain runs to 831 residues: uncharacterized protein (831 aa).

Positions Met1–Ala146 constitute a CID domain. 4 disordered regions span residues Ser205–Ser233, Lys265–Asn354, Ile434–Ser480, and Cys572–His831. 2 stretches are compositionally biased toward low complexity: residues Asn272–Asn354 and Ile434–Asn477. Composition is skewed to basic and acidic residues over residues Asn592–Arg601 and Ser611–Glu813. A compositionally biased stretch (low complexity) spans Asn817 to His831.

This is an uncharacterized protein from Dictyostelium discoideum (Social amoeba).